A 570-amino-acid chain; its full sequence is Sulfite reductase [NADPH] hemoprotein beta-component 1 (570 aa).

[4Fe-4S] cluster is bound by residues Cys-434, Cys-440, Cys-479, and Cys-483. Cys-483 contacts siroheme.

It belongs to the nitrite and sulfite reductase 4Fe-4S domain family. In terms of assembly, alpha(8)-beta(8). The alpha component is a flavoprotein, the beta component is a hemoprotein. It depends on siroheme as a cofactor. [4Fe-4S] cluster is required as a cofactor.

The enzyme catalyses hydrogen sulfide + 3 NADP(+) + 3 H2O = sulfite + 3 NADPH + 4 H(+). It functions in the pathway sulfur metabolism; hydrogen sulfide biosynthesis; hydrogen sulfide from sulfite (NADPH route): step 1/1. In terms of biological role, component of the sulfite reductase complex that catalyzes the 6-electron reduction of sulfite to sulfide. This is one of several activities required for the biosynthesis of L-cysteine from sulfate. This Klebsiella pneumoniae (strain 342) protein is Sulfite reductase [NADPH] hemoprotein beta-component 1.